We begin with the raw amino-acid sequence, 515 residues long: Serine/threonine-protein kinase STE7 (515 aa).

The Protein kinase domain maps to 191-466; that stretch reads LVQLGKIGAG…IHELLHHDLI (276 aa). ATP contacts are provided by residues 197–205 and lysine 220; that span reads IGAGNSGTV. Aspartate 331 functions as the Proton acceptor in the catalytic mechanism. At serine 359 the chain carries Phosphoserine. Residue threonine 363 is modified to Phosphothreonine.

Belongs to the protein kinase superfamily. STE Ser/Thr protein kinase family. MAP kinase kinase subfamily.

The catalysed reaction is L-seryl-[protein] + ATP = O-phospho-L-seryl-[protein] + ADP + H(+). The enzyme catalyses L-threonyl-[protein] + ATP = O-phospho-L-threonyl-[protein] + ADP + H(+). It carries out the reaction L-tyrosyl-[protein] + ATP = O-phospho-L-tyrosyl-[protein] + ADP + H(+). Its activity is regulated as follows. Phosphorylated at multiple sites in response to pheromone. Functionally, serine/threonine protein kinase required for cell-type-specific transcription and signal transduction in yeast. It is thought that it is phosphorylated by the ste11 protein kinase and that it can phosphorylate the FUS3 and or KSS1 kinases. The polypeptide is Serine/threonine-protein kinase STE7 (STE7) (Saccharomyces cerevisiae (strain ATCC 204508 / S288c) (Baker's yeast)).